We begin with the raw amino-acid sequence, 395 residues long: G-protein coupled receptor 182 (395 aa).

The Extracellular segment spans residues 1-53 (MSVIPSPRPVSTLEPDNDFRDIHNWTELLHLFNQTFTDCHIEFNENTKHVVLF). Asparagine 24 and asparagine 33 each carry an N-linked (GlcNAc...) asparagine glycan. Residues 54–75 (VFYLAIFVVGLVENVLVICVNC) form a helical membrane-spanning segment. Topologically, residues 76-86 (RRSGRVGMLNL) are cytoplasmic. A helical transmembrane segment spans residues 87–109 (YILNMAIADLGIILSLPVWMLEV). At 110-123 (MLEYTWLWGSFSCR) the chain is on the extracellular side. A disulfide bond links cysteine 122 and cysteine 198. A helical membrane pass occupies residues 124 to 145 (FIHYFYLVNMYSSIFFLTCLSI). At 146–166 (DRYVTLTNTSPSWQRHQHRIR) the chain is on the cytoplasmic side. A helical membrane pass occupies residues 167 to 189 (RAVCAGVWVLSAIIPLPEVVHIQ). Over 190–213 (LLDGSEPMCLFLAPFETYSAWALA) the chain is Extracellular. The chain crosses the membrane as a helical span at residues 214–235 (VALSATILGFLLPFLLIAVFNI). The Cytoplasmic segment spans residues 236–254 (LTACRLRRQRQTESRRHCL). Residues 255 to 276 (LMWAYIVVFAICWLPYQVTMLL) form a helical membrane-spanning segment. Residues 277-295 (LTLHGTHIFLHCHLVNLLY) lie on the Extracellular side of the membrane. Residues 296–316 (FFYEIIDCFSMLHCVANPILY) form a helical membrane-spanning segment. Over 317–395 (NFLSPSFRGR…QTPHLHSAIL (79 aa)) the chain is Cytoplasmic. Serine 329 carries the post-translational modification Phosphoserine.

It belongs to the G-protein coupled receptor 1 family. As to expression, expressed in liver and lung.

The protein resides in the cell membrane. Orphan receptor. In Mus musculus (Mouse), this protein is G-protein coupled receptor 182 (Gpr182).